The primary structure comprises 460 residues: T-box transcription factor TBX1 (460 aa).

2 disordered regions span residues 30–53 (LNTP…ESQF) and 67–99 (GSNS…TLVK). Polar residues predominate over residues 67-84 (GSNSAQAPAQGDSGTSNC). A DNA-binding region (T-box) is located at residues 116-294 (LWDEFNQLGT…SNPFAKGFRD (179 aa)). Disordered regions lie at residues 317–355 (RTRN…DPTH) and 376–400 (PLTA…PDTL). The segment covering 320–330 (NPMSSPPQQNG) has biased composition (polar residues). The segment covering 331 to 344 (TEKEDSRREYDRDP) has biased composition (basic and acidic residues). The Nuclear localization signal signature appears at 418-429 (KTRPSPYPSPSI).

In terms of assembly, binds DNA as a dimer. As to expression, expressed in the ear and mesendodermal components of pharyngeal arches.

It localises to the nucleus. In terms of biological role, probable transcriptional regulator involved in developmental processes. Binds to the palindromic T site 5'-TTCACACCTAGGTGTGAA-3' DNA sequence. Is required for normal development of the pharyngeal arch arteries. Acts cell autonomously in the pharyngeal mesendoderm and influences the development of neural crest-derived cartilages secondarily. The protein is T-box transcription factor TBX1 (tbx1) of Danio rerio (Zebrafish).